The chain runs to 172 residues: C-phycocyanin beta chain (172 aa).

An N4-methylasparagine modification is found at asparagine 72. 2 residues coordinate (2R,3E)-phycocyanobilin: cysteine 82 and cysteine 153.

This sequence belongs to the phycobiliprotein family. In terms of assembly, heterodimer of an alpha and a beta subunit, which further assembles into trimers and the trimers into hexamers. The basic functional unit of phycobiliproteins is a ring-shaped hexamer formed from two back-to-back trimers contacting via the alpha chain subunits. The trimers are composed of alpha/beta subunit heterodimers arranged around a three-fold axis of symmetry. The phycoerythrins also contain a gamma subunit which is located in the center of the hexamer. Post-translationally, contains two covalently linked bilin chromophores.

It localises to the plastid. The protein resides in the chloroplast thylakoid membrane. Functionally, light-harvesting photosynthetic bile pigment-protein from the phycobiliprotein complex (phycobilisome, PBS). Phycocyanin is the major phycobiliprotein in the PBS rod. This Rhodella violacea (Red alga) protein is C-phycocyanin beta chain (cpcB).